Consider the following 601-residue polypeptide: Mitochondrial tRNA methylthiotransferase CDK5RAP1 (601 aa).

Residues 1 to 33 (MHPLQCVLQVQRSLGWGPLASVSWLSLRMCRAH) constitute a mitochondrion transit peptide. In terms of domain architecture, MTTase N-terminal spans 100-220 (RKVYLETYGC…LPRLLAVAES (121 aa)). 6 residues coordinate [4Fe-4S] cluster: Cys-109, Cys-145, Cys-183, Cys-258, Cys-262, and Cys-265. One can recognise a Radical SAM core domain in the interval 244-512 (SASATSAFVS…ITIFREEATK (269 aa)). A TRAM domain is found at 515 to 590 (QTSVGCTQLV…SQTLRGHVLC (76 aa)).

The protein belongs to the methylthiotransferase family. MiaB subfamily. Interacts with CDK5R1 (p35 form). CDK5RAP1, CDK5RAP2 and CDK5RAP3 show competitive binding to CDK5R1. Forms a complex with CDK5R1 and CDK5. [4Fe-4S] cluster is required as a cofactor. As to expression, expressed in heart, brain, placenta, lung, liver, skeletal muscle, kidney and pancreas. Expressed in neurons of central nervous tissue. In terms of tissue distribution, mainly expressed in brain, placenta and testis. High expression in placenta and lung.

It localises to the mitochondrion. It catalyses the reaction N(6)-dimethylallyladenosine(37) in tRNA + (sulfur carrier)-SH + AH2 + 2 S-adenosyl-L-methionine = 2-methylsulfanyl-N(6)-dimethylallyladenosine(37) in tRNA + (sulfur carrier)-H + 5'-deoxyadenosine + L-methionine + A + S-adenosyl-L-homocysteine + 2 H(+). Its function is as follows. Methylthiotransferase that catalyzes the conversion of N6-(dimethylallyl)adenosine (i(6)A) to 2-methylthio-N6-(dimethylallyl)adenosine (ms(2)i(6)A) at position 37 (adjacent to the 3'-end of the anticodon) of four mitochondrial DNA-encoded tRNAs (Ser(UCN), Phe, Tyr and Trp). Essential for efficient and highly accurate protein translation by the ribosome. Specifically inhibits CDK5 activation by CDK5R1. Essential for efficient mitochondrial protein synthesis and respiratory chain; shows pathological consequences in mitochondrial disease. The protein is Mitochondrial tRNA methylthiotransferase CDK5RAP1 of Homo sapiens (Human).